The following is an 87-amino-acid chain: Putative regulatory protein GWCH70_1057 (87 aa).

The protein belongs to the RemA family.

The chain is Putative regulatory protein GWCH70_1057 from Geobacillus sp. (strain WCH70).